A 492-amino-acid polypeptide reads, in one-letter code: N-succinylglutamate 5-semialdehyde dehydrogenase (492 aa).

220 to 225 (GSANTG) contacts NAD(+). Catalysis depends on residues Glu-243 and Cys-277.

Belongs to the aldehyde dehydrogenase family. AstD subfamily.

The enzyme catalyses N-succinyl-L-glutamate 5-semialdehyde + NAD(+) + H2O = N-succinyl-L-glutamate + NADH + 2 H(+). Its pathway is amino-acid degradation; L-arginine degradation via AST pathway; L-glutamate and succinate from L-arginine: step 4/5. Functionally, catalyzes the NAD-dependent reduction of succinylglutamate semialdehyde into succinylglutamate. The protein is N-succinylglutamate 5-semialdehyde dehydrogenase of Escherichia coli O7:K1 (strain IAI39 / ExPEC).